A 718-amino-acid chain; its full sequence is Centromere/kinetochore protein zw10 (718 aa).

It belongs to the ZW10 family.

It localises to the cytoplasm. It is found in the nucleus. The protein resides in the chromosome. The protein localises to the centromere. Its subcellular location is the kinetochore. In terms of biological role, required for accurate chromosome segregation. This chain is Centromere/kinetochore protein zw10 (mit(1)15), found in Drosophila pseudoobscura pseudoobscura (Fruit fly).